We begin with the raw amino-acid sequence, 481 residues long: uncharacterized protein (481 aa).

The chain crosses the membrane as a helical span at residues 18-38 (FMIVTAIAVAIFVVITGVVIF).

The protein localises to the cell inner membrane. Involved in DNA conjugation in the recipient strain. This is an uncharacterized protein from Mycolicibacterium smegmatis (strain MKD8) (Mycobacterium smegmatis).